Consider the following 442-residue polypeptide: Kelch domain-containing protein 10 (442 aa).

Positions 1–58 (MSAAQGWDRNRRRGGGAAGGGGGGSGAGGGSGGNGGRGTGQLNRFVQLSGRPHLPGKK) are disordered. Arginine 13 bears the Omega-N-methylarginine mark. A compositionally biased stretch (gly residues) spans 15 to 39 (GGAAGGGGGGSGAGGGSGGNGGRGT). Kelch repeat units lie at residues 87–154 (RPPP…PREL), 155–198 (ASMS…ALLS), 199–260 (CRGK…PEER), 261–319 (YRHE…RRCH), 320–364 (SCVQ…PEPV), and 365–403 (YFHC…LVVP). The interaction with CUL2 stretch occupies residues 401 to 442 (VVPSLLELAWEKLLAAFPNLANLSRTQLLHLGLTQGLIERLK).

Belongs to the KLHDC10 family. In terms of assembly, component of a CRL2 E3 ubiquitin-protein ligase complex, also named ECS (Elongin BC-CUL2/5-SOCS-box protein) complex, composed of CUL2, Elongin BC (ELOB and ELOC), RBX1 and substrate-specific adapter KLHDC10. Interacts (via the 6 Kelch repeats) with PPP5C.

The protein resides in the nucleus. Its subcellular location is the cytoplasm. Its pathway is protein modification; protein ubiquitination. Functionally, substrate-recognition component of a Cul2-RING (CRL2) E3 ubiquitin-protein ligase complex of the DesCEND (destruction via C-end degrons) pathway, which recognizes a C-degron located at the extreme C-terminus of target proteins, leading to their ubiquitination and degradation. The C-degron recognized by the DesCEND pathway is usually a motif of less than ten residues and can be present in full-length proteins, truncated proteins or proteolytically cleaved forms. The CRL2(KLHDC10) complex specifically recognizes proteins with a proline-glycine (Pro-Gly) or an alanine tail (CAT tail) at the C-terminus, leading to their ubiquitination and degradation. The CRL2(KLHDC10) complex is involved in the ribosome-associated quality control (RQC) pathway, which mediates the extraction of incompletely synthesized nascent chains from stalled ribosomes: CRL2(KLHDC10) acts downstream of NEMF and recognizes CAT tails associated with stalled nascent chains, leading to their ubiquitination and degradation. Participates in the oxidative stress-induced cell death through MAP3K5 activation. Inhibits PPP5C phosphatase activity on MAP3K5. Acts as a regulator of necroptosis. The chain is Kelch domain-containing protein 10 (KLHDC10) from Bos taurus (Bovine).